A 409-amino-acid chain; its full sequence is Gamma-glutamyl phosphate reductase (409 aa).

Belongs to the gamma-glutamyl phosphate reductase family.

The protein resides in the cytoplasm. It carries out the reaction L-glutamate 5-semialdehyde + phosphate + NADP(+) = L-glutamyl 5-phosphate + NADPH + H(+). It functions in the pathway amino-acid biosynthesis; L-proline biosynthesis; L-glutamate 5-semialdehyde from L-glutamate: step 2/2. In terms of biological role, catalyzes the NADPH-dependent reduction of L-glutamate 5-phosphate into L-glutamate 5-semialdehyde and phosphate. The product spontaneously undergoes cyclization to form 1-pyrroline-5-carboxylate. The polypeptide is Gamma-glutamyl phosphate reductase (Koribacter versatilis (strain Ellin345)).